The following is a 338-amino-acid chain: 5-dehydro-2-deoxygluconokinase (338 aa).

Belongs to the carbohydrate kinase PfkB family.

It carries out the reaction 5-dehydro-2-deoxy-D-gluconate + ATP = 6-phospho-5-dehydro-2-deoxy-D-gluconate + ADP + H(+). Its pathway is polyol metabolism; myo-inositol degradation into acetyl-CoA; acetyl-CoA from myo-inositol: step 5/7. In terms of biological role, catalyzes the phosphorylation of 5-dehydro-2-deoxy-D-gluconate (2-deoxy-5-keto-D-gluconate or DKG) to 6-phospho-5-dehydro-2-deoxy-D-gluconate (DKGP). The polypeptide is 5-dehydro-2-deoxygluconokinase (Mesomycoplasma hyopneumoniae (strain 232) (Mycoplasma hyopneumoniae)).